We begin with the raw amino-acid sequence, 392 residues long: uncharacterized protein (392 aa).

This sequence belongs to the mimivirus L17x/L18x family.

This is an uncharacterized protein from Acanthamoeba polyphaga (Amoeba).